The primary structure comprises 677 residues: L-type lectin-domain containing receptor kinase IV.2 (677 aa).

The N-terminal stretch at 1-22 is a signal peptide; the sequence is MFVKLKLIFFFFLLCQIMISSS. The Extracellular segment spans residues 23–291; that stretch reads QNLNFTYNGF…EPRRISEFYK (269 aa). Positions 24-262 are legume-lectin like; it reads NLNFTYNGFH…EHFLVGWSFR (239 aa). N-linked (GlcNAc...) asparagine glycosylation is found at asparagine 26, asparagine 57, asparagine 81, asparagine 128, asparagine 134, asparagine 171, asparagine 186, and asparagine 203. A helical membrane pass occupies residues 292-312; the sequence is IGMPLISLSLIFSIIFLAFYI. The Cytoplasmic segment spans residues 313 to 677; sequence VRRKKKYEEE…IADSLLSGGR (365 aa). One can recognise a Protein kinase domain in the interval 347 to 625; the sequence is FKEKDLLGSG…LQYLRGDMAL (279 aa). ATP contacts are provided by residues 353 to 361 and lysine 376; that span reads LGSGGFGRV. Catalysis depends on aspartate 472, which acts as the Proton acceptor.

The protein in the C-terminal section; belongs to the protein kinase superfamily. Ser/Thr protein kinase family. This sequence in the N-terminal section; belongs to the leguminous lectin family.

Its subcellular location is the cell membrane. The enzyme catalyses L-seryl-[protein] + ATP = O-phospho-L-seryl-[protein] + ADP + H(+). It carries out the reaction L-threonyl-[protein] + ATP = O-phospho-L-threonyl-[protein] + ADP + H(+). In terms of biological role, required during pollen development. Functionally, involved in resistance response to the pathogenic bacteria Pseudomonas syringae. In Arabidopsis thaliana (Mouse-ear cress), this protein is L-type lectin-domain containing receptor kinase IV.2.